The primary structure comprises 29 residues: DDCGTLFSGCDTSKDCCEGYVCHLWCKYK.

3 disulfides stabilise this stretch: cysteine 3-cysteine 17, cysteine 10-cysteine 22, and cysteine 16-cysteine 26.

As to expression, expressed by the venom gland.

The protein localises to the secreted. Its function is as follows. Inhibitor of voltage-gated potassium channels of the Kv4/KCND family. Blocks calcium channels (Cav). The sequence is that of Kappa-sparatoxin-Hv1e from Heteropoda venatoria (Brown huntsman spider).